Consider the following 243-residue polypeptide: I/6 autoantigen (243 aa).

The 36-residue stretch at 110-145 (LSVEEVDALFNALDSDNRGYVSVDEFMDALYGEEGR) folds into the EF-hand domain. The tract at residues 166-243 (PSWRMRPTPK…PPKQKAGCGC (78 aa)) is disordered. The span at 176 to 196 (PTRKLRQKRKREQGQKRKQGQ) shows a compositional bias: basic residues. 6 consecutive repeat copies span residues 181–188 (RQKRKREQ), 189–196 (GQKRKQGQ), 197–204 (RQKQEQGQ), 205–212 (RQKREQGQ), 213–220 (RQKQEQGQ), and 221–228 (KRKRERGG). A 6 X 8 AA tandem repeats region spans residues 181 to 228 (RQKRKREQGQKRKQGQRQKQEQGQRQKREQGQRQKQEQGQKRKRERGG). Basic and acidic residues predominate over residues 198–220 (QKQEQGQRQKREQGQRQKQEQGQ).

It localises to the cytoplasm. The protein resides in the cytoskeleton. Its function is as follows. Microtubule-associated protein that may be involved in cross-linking microtubules. The sequence is that of I/6 autoantigen from Trypanosoma brucei brucei.